The sequence spans 652 residues: Adhesion G protein-coupled receptor E3 (652 aa).

The signal sequence occupies residues 1-21; sequence MQGPLLLPGLCFLLSLFGAVT. At 22-357 the chain is on the extracellular side; sequence QKTKTSCAKC…TSQEEDPVLT (336 aa). The EGF-like 1 domain occupies 24–66; sequence TKTSCAKCPPNASCVNNTHCTCNHGYTSGSGQKLFTFPLETCN. Intrachain disulfides connect Cys28/Cys37, Cys31/Cys43, Cys45/Cys65, Cys71/Cys85, Cys79/Cys94, and Cys96/Cys117. 2 N-linked (GlcNAc...) asparagine glycosylation sites follow: Asn34 and Asn39. The EGF-like 2; calcium-binding domain maps to 67-118; it reads DINECTPPYSVYCGFNAVCYNVEGSFYCQCVPGYRLHSGNEQFSNSNENTCQ. Residues Asn145, Asn189, Asn202, Asn250, Asn279, Asn327, and Asn334 are each glycosylated (N-linked (GlcNAc...) asparagine). Residues 183-351 form the GAIN-B domain; sequence KVLKIQNDSV…AVLMALTSQE (169 aa). 2 disulfides stabilise this stretch: Cys304/Cys333 and Cys321/Cys335. Positions 304–351 are GPS; sequence CVYWKSTGQGSQWSRDGCFLIHVNKSHTMCNCSHLSSFAVLMALTSQE. A helical membrane pass occupies residues 358-378; the sequence is VITYVGLSVSLLCLLLAALTF. The Cytoplasmic portion of the chain corresponds to 379–389; it reads LLCKAIRNTST. A helical membrane pass occupies residues 390–410; that stretch reads SLHLQLSLCLFLAHLLFLVGI. The Extracellular segment spans residues 411–416; sequence DRTEPK. Residues 417 to 437 form a helical membrane-spanning segment; sequence VLCSIIAGALHYLYLAAFTWM. The Cytoplasmic segment spans residues 438-464; the sequence is LLEGVHLFLTARNLTVVNYSSINRLMK. Residues 465–485 form a helical membrane-spanning segment; that stretch reads WIMFPVGYGVPAVTVAISAAS. The Extracellular segment spans residues 486-508; that stretch reads WPHLYGTADRCWLHLDQGFMWSF. The helical transmembrane segment at 509–529 threads the bilayer; it reads LGPVCAIFSANLVLFILVFWI. Topologically, residues 530–557 are cytoplasmic; sequence LKRKLSSLNSEVSTIQNTRMLAFKATAQ. A helical membrane pass occupies residues 558–578; it reads LFILGCTWCLGLLQVGPAAQV. Residues 579 to 580 are Extracellular-facing; the sequence is MA. A helical transmembrane segment spans residues 581-601; it reads YLFTIINSLQGFFIFLVYCLL. Residues 602–652 are Cytoplasmic-facing; the sequence is SQQVQKQYQKWFREIVKSKSESETYTLSSKMGPDSKPSEGDVFPGQVKRKY. The interval 621–652 is disordered; the sequence is SESETYTLSSKMGPDSKPSEGDVFPGQVKRKY.

This sequence belongs to the G-protein coupled receptor 2 family. Adhesion G-protein coupled receptor (ADGR) subfamily. Forms a heterodimer, consisting of a large extracellular region (alpha subunit) non-covalently linked to a seven-transmembrane moiety (beta subunit). Proteolytically cleaved into 2 subunits, an extracellular alpha subunit and a seven-transmembrane subunit. Displays a predominantly leukocyte-restricted expression, with highest levels in neutrophils, monocytes and macrophages.

The protein resides in the cell membrane. Its subcellular location is the secreted. Its function is as follows. Orphan receptor that may play a role myeloid-myeloid interactions during immune and inflammatory responses. A ligand for the soluble form of this receptor is present at the surface of monocytes-derived macrophages and activated neutrophils. This is Adhesion G protein-coupled receptor E3 from Homo sapiens (Human).